Here is a 256-residue protein sequence, read N- to C-terminus: 2-C-methyl-D-erythritol 4-phosphate cytidylyltransferase (256 aa).

It belongs to the IspD/TarI cytidylyltransferase family. IspD subfamily.

The catalysed reaction is 2-C-methyl-D-erythritol 4-phosphate + CTP + H(+) = 4-CDP-2-C-methyl-D-erythritol + diphosphate. Its pathway is isoprenoid biosynthesis; isopentenyl diphosphate biosynthesis via DXP pathway; isopentenyl diphosphate from 1-deoxy-D-xylulose 5-phosphate: step 2/6. Catalyzes the formation of 4-diphosphocytidyl-2-C-methyl-D-erythritol from CTP and 2-C-methyl-D-erythritol 4-phosphate (MEP). This chain is 2-C-methyl-D-erythritol 4-phosphate cytidylyltransferase, found in Corynebacterium glutamicum (strain ATCC 13032 / DSM 20300 / JCM 1318 / BCRC 11384 / CCUG 27702 / LMG 3730 / NBRC 12168 / NCIMB 10025 / NRRL B-2784 / 534).